Consider the following 1180-residue polypeptide: Polyamine-transporting ATPase 13A2 (1180 aa).

Topologically, residues 1–44 (MSADSSPLVGSTPTGYGTLTIGTSIDPLSSSVSSVRLSGYCGSP) are cytoplasmic. An intramembrane segment occupies 45–65 (WRVIGYHVVVWMMAGIPLLLF). The Cytoplasmic segment spans residues 66-235 (RWKPLWGVRL…KSYPQLLVDE (170 aa)). S151 bears the Phosphoserine mark. Residues 236-253 (ALNPYYGFQAFSIALWLA) traverse the membrane as a helical segment. The Lumenal segment spans residues 254-256 (DHY). Residues 257–276 (YWYALCIFLISSISICLSLY) form a helical membrane-spanning segment. Residues 277 to 427 (KTRKQSQTLR…NFKFYKHSMK (151 aa)) lie on the Cytoplasmic side of the membrane. The helical transmembrane segment at 428–448 (FVAALSVLALLGTIYSIFILY) threads the bilayer. The Lumenal portion of the chain corresponds to 449-463 (RNRVPLNEIVIRALD). The helical transmembrane segment at 464 to 484 (LVTVVVPPALPAAMTVCTLYA) threads the bilayer. The Cytoplasmic segment spans residues 485 to 930 (QSRLRRQGIF…REGRCSLDTS (446 aa)). The active-site 4-aspartylphosphate intermediate is D513. Mg(2+) contacts are provided by D878 and D882. Residues 931–951 (FSVFKYMALYSLTQFISVLIL) traverse the membrane as a helical segment. The Lumenal portion of the chain corresponds to 952–957 (YTINTN). Residues 958-978 (LGDLQFLAIDLVITTTVAVLM) traverse the membrane as a helical segment. Over 979-994 (SRTGPALVLGRVRPPG) the chain is Cytoplasmic. A helical transmembrane segment spans residues 995-1015 (ALLSVPVLSSLLLQMVLVTGV). Residues 1016 to 1048 (QLGGYFLTLAQPWFVPLNRTVAAPDNLPNYENT) are Lumenal-facing. An N-linked (GlcNAc...) asparagine glycan is attached at N1033. Residues 1049–1069 (VVFSLSSFQYLILAAAVSKGA) traverse the membrane as a helical segment. At 1070–1080 (PFRRPLYTNVP) the chain is on the cytoplasmic side. A helical membrane pass occupies residues 1081 to 1101 (FLVALALLSSVLVGLVLVPGL). Topologically, residues 1102-1117 (LQGPLALRNITDTGFK) are lumenal. N-linked (GlcNAc...) asparagine glycosylation occurs at N1110. The chain crosses the membrane as a helical span at residues 1118–1138 (LLLLGLVTLNFVGAFMLESVL). The Cytoplasmic portion of the chain corresponds to 1139–1180 (DQCLPACLRRLRPKRASKKRFKQLERELAEQPWPPLPAGPLR).

Belongs to the cation transport ATPase (P-type) (TC 3.A.3) family. Type V subfamily. As to quaternary structure, interacts with MYCBP2; the interaction inhibits the ubiquitination of TSC2 by MYCBP2. Interacts with HDAC6; the interaction results in recruitment of HDAC6 to lysosomes to promote CTTN deacetylation. In terms of processing, autophosphorylated. Accumulates in an inactive autophosphorylated state and autophosphorylation is stimulated by phosphatidic acid and phosphatidylinositol 3,5-bisphosphate but not by Mn(2+) or Zn(2+). The presence of spermine results in a dose-dependent reduction in autophosphorylation. Expressed in brain; protein levels are markedly increased in brain from subjects with Parkinson disease and subjects with dementia with Lewy bodies. Detected in pyramidal neurons located throughout the cingulate cortex (at protein level). In the substantia nigra, it is found in neuromelanin-positive dopaminergic neurons (at protein level).

The protein localises to the lysosome membrane. It is found in the late endosome membrane. The protein resides in the endosome. It localises to the multivesicular body membrane. Its subcellular location is the cytoplasmic vesicle. The protein localises to the autophagosome membrane. The catalysed reaction is spermidine(out) + ATP + H2O = spermidine(in) + ADP + phosphate + H(+). It catalyses the reaction spermine(out) + ATP + H2O = spermine(in) + ADP + phosphate + H(+). Accumulates in an inactive autophosphorylated state. The presence of spermine results in a dose-dependent reduction in autophosphorylation. ATPase which acts as a lysosomal polyamine exporter with high affinity for spermine. Also stimulates cellular uptake of polyamines and protects against polyamine toxicity. Plays a role in intracellular cation homeostasis and the maintenance of neuronal integrity. Contributes to cellular zinc homeostasis. Confers cellular protection against Mn(2+) and Zn(2+) toxicity and mitochondrial stress. Required for proper lysosomal and mitochondrial maintenance. Regulates the autophagy-lysosome pathway through the control of SYT11 expression at both transcriptional and post-translational levels. Facilitates recruitment of deacetylase HDAC6 to lysosomes to deacetylate CTTN, leading to actin polymerization, promotion of autophagosome-lysosome fusion and completion of autophagy. Promotes secretion of exosomes as well as secretion of SCNA via exosomes. Plays a role in lipid homeostasis. This is Polyamine-transporting ATPase 13A2 from Homo sapiens (Human).